The chain runs to 488 residues: V-type proton ATPase subunit B 1 (488 aa).

Belongs to the ATPase alpha/beta chains family. In terms of assembly, V-ATPase is a heteromultimeric enzyme composed of a peripheral catalytic V1 complex (main components: subunits A, B, C, D, E, and F) attached to an integral membrane V0 proton pore complex (main component: the proteolipid protein).

Its function is as follows. Non-catalytic subunit of the peripheral V1 complex of vacuolar ATPase. V-ATPase is responsible for acidifying a variety of intracellular compartments in eukaryotic cells. This chain is V-type proton ATPase subunit B 1, found in Gossypium hirsutum (Upland cotton).